Consider the following 600-residue polypeptide: Transcription factor efl-3 (600 aa).

The segment at 35–65 (LPEPRVNRTTDPDHENLLPSPVPRPSPAMSQ) is disordered. The segment covering 39–50 (RVNRTTDPDHEN) has biased composition (basic and acidic residues). 2 consecutive DNA-binding regions follow at residues 95–164 (RKEK…QWQG) and 253–343 (RDRQ…VYCG).

The protein belongs to the E2F/DP family.

It is found in the nucleus. In terms of biological role, probable transcription factor which represses gene expression in a subset of ventral nerve cord neurons. Involved in regulating programmed cell death and determining cell fate during development, acting in a partially redundant manner with lin-39 to repress the BH3 domain-encoding gene egl-1 in the VA and VB motor neurons. This is Transcription factor efl-3 from Caenorhabditis elegans.